Here is a 701-residue protein sequence, read N- to C-terminus: Octapeptide-repeat antigen (701 aa).

N-linked (GlcNAc...) asparagine glycans are attached at residues Asn40, Asn41, Asn76, Asn111, Asn127, Asn139, Asn181, Asn189, Asn311, Asn334, Asn344, Asn477, and Asn557. The tract at residues 120–140 (IENEEKSNGSRKSSNKQKYNE) is disordered. Residues 641-701 (LSGSSTGSMN…IKSGSKDHIK (61 aa)) form a disordered region. Positions 642 to 655 (SGSSTGSMNNGKSG) are enriched in low complexity. 6 tandem repeats follow at residues 653–660 (KSGSKSDI), 661–668 (KGGSKDDI), 669–676 (KSGSKDDI), 677–684 (KSGSKADI), 685–692 (KSGSKDDI), and 693–700 (KSGSKDHI). The 6 X 8 AA approximate tandem repeats stretch occupies residues 653–700 (KSGSKSDIKGGSKDDIKSGSKDDIKSGSKADIKSGSKDDIKSGSKDHI). Residues 656–701 (SKSDIKGGSKDDIKSGSKDDIKSGSKADIKSGSKDDIKSGSKDHIK) are compositionally biased toward basic and acidic residues.

This sequence belongs to the ATP-dependent AMP-binding enzyme family.

The protein localises to the parasitophorous vacuole. The protein is Octapeptide-repeat antigen of Plasmodium falciparum (isolate NF7 / Ghana).